Consider the following 417-residue polypeptide: Gamma-glutamyl phosphate reductase (417 aa).

This sequence belongs to the gamma-glutamyl phosphate reductase family.

The protein resides in the cytoplasm. It carries out the reaction L-glutamate 5-semialdehyde + phosphate + NADP(+) = L-glutamyl 5-phosphate + NADPH + H(+). It participates in amino-acid biosynthesis; L-proline biosynthesis; L-glutamate 5-semialdehyde from L-glutamate: step 2/2. In terms of biological role, catalyzes the NADPH-dependent reduction of L-glutamate 5-phosphate into L-glutamate 5-semialdehyde and phosphate. The product spontaneously undergoes cyclization to form 1-pyrroline-5-carboxylate. The sequence is that of Gamma-glutamyl phosphate reductase from Escherichia coli O7:K1 (strain IAI39 / ExPEC).